Here is a 311-residue protein sequence, read N- to C-terminus: Mediator of RNA polymerase II transcription subunit 27 (311 aa).

It belongs to the Mediator complex subunit 27 family. As to quaternary structure, component of the Mediator complex.

The protein resides in the nucleus. Functionally, component of the Mediator complex, a coactivator involved in the regulated transcription of nearly all RNA polymerase II-dependent genes. Mediator functions as a bridge to convey information from gene-specific regulatory proteins to the basal RNA polymerase II transcription machinery. Mediator is recruited to promoters by direct interactions with regulatory proteins and serves as a scaffold for the assembly of a functional preinitiation complex with RNA polymerase II and the general transcription factors. Required for the development of dopaminergic amacrine cells in the retina. May also negatively regulate the development of rod photoreceptor cells. The sequence is that of Mediator of RNA polymerase II transcription subunit 27 (med27) from Danio rerio (Zebrafish).